A 152-amino-acid polypeptide reads, in one-letter code: Transcriptional regulator MraZ (152 aa).

2 consecutive SpoVT-AbrB domains span residues 5 to 52 and 81 to 124; these read ATLV…PLPE and ASEC…DEQT.

It belongs to the MraZ family. As to quaternary structure, forms oligomers.

The protein resides in the cytoplasm. The protein localises to the nucleoid. Negatively regulates its own expression and that of the subsequent genes in the proximal part of the division and cell wall (dcw) gene cluster. Acts by binding directly to DNA. May also regulate the expression of genes outside the dcw cluster. The chain is Transcriptional regulator MraZ from Erwinia tasmaniensis (strain DSM 17950 / CFBP 7177 / CIP 109463 / NCPPB 4357 / Et1/99).